The following is a 484-amino-acid chain: Putative sodium/proton-dependent alanine carrier protein YrbD (484 aa).

Helical transmembrane passes span 11–31 (VLWSTPVIYILLGIGFAFSIM), 66–88 (ALSGRVGTGNIAGVATAIAFGGP), 92–114 (FWMWAIAFIGAASAFVESTLAQI), 139–159 (WFAVLFAAAALIAMAFLMPGV), 172–192 (FGISPFVTGCGLVLLLGFIIF), 205–225 (IVPFMAIGYILLSLIIIVMNV), 238–258 (SAFALDSAFGGLIGMAISWGV), 292–312 (AFSVYIDTLFVCSATAFMILF), 350–370 (GFGAGFVAIALFFFAFTTIMA), 390–410 (WAMLGLKLIILAATFYGTVKT), and 416–436 (ALGDAGLGIMVWLNVIAIVLL).

It belongs to the alanine or glycine:cation symporter (AGCS) (TC 2.A.25) family.

The protein resides in the cell membrane. The polypeptide is Putative sodium/proton-dependent alanine carrier protein YrbD (yrbD) (Bacillus subtilis (strain 168)).